A 344-amino-acid polypeptide reads, in one-letter code: Sulfate/thiosulfate import ATP-binding protein CysA (344 aa).

The region spanning 9 to 239 is the ABC transporter domain; it reads IQVSQVSKQF…PATPFVMSFI (231 aa). 41 to 48 is an ATP binding site; sequence GPSGSGKS.

Belongs to the ABC transporter superfamily. Sulfate/tungstate importer (TC 3.A.1.6) family. The complex is composed of two ATP-binding proteins (CysA), two transmembrane proteins (CysT and CysW) and a solute-binding protein (CysP).

The protein localises to the cell inner membrane. It catalyses the reaction sulfate(out) + ATP + H2O = sulfate(in) + ADP + phosphate + H(+). It carries out the reaction thiosulfate(out) + ATP + H2O = thiosulfate(in) + ADP + phosphate + H(+). Functionally, part of the ABC transporter complex CysAWTP involved in sulfate/thiosulfate import. Responsible for energy coupling to the transport system. In Synechococcus elongatus (strain ATCC 33912 / PCC 7942 / FACHB-805) (Anacystis nidulans R2), this protein is Sulfate/thiosulfate import ATP-binding protein CysA.